A 155-amino-acid polypeptide reads, in one-letter code: 2-C-methyl-D-erythritol 2,4-cyclodiphosphate synthase (155 aa).

A divalent metal cation is bound by residues D8 and H10. Residues 8–10 and 34–35 each bind 4-CDP-2-C-methyl-D-erythritol 2-phosphate; these read DVH and HS. H42 contributes to the a divalent metal cation binding site. 4-CDP-2-C-methyl-D-erythritol 2-phosphate contacts are provided by residues 56–58, 61–65, 132–135, F139, and R142; these read DIG, FPDSD, and TTEE.

This sequence belongs to the IspF family. Homotrimer. A divalent metal cation serves as cofactor.

It catalyses the reaction 4-CDP-2-C-methyl-D-erythritol 2-phosphate = 2-C-methyl-D-erythritol 2,4-cyclic diphosphate + CMP. Its pathway is isoprenoid biosynthesis; isopentenyl diphosphate biosynthesis via DXP pathway; isopentenyl diphosphate from 1-deoxy-D-xylulose 5-phosphate: step 4/6. In terms of biological role, involved in the biosynthesis of isopentenyl diphosphate (IPP) and dimethylallyl diphosphate (DMAPP), two major building blocks of isoprenoid compounds. Catalyzes the conversion of 4-diphosphocytidyl-2-C-methyl-D-erythritol 2-phosphate (CDP-ME2P) to 2-C-methyl-D-erythritol 2,4-cyclodiphosphate (ME-CPP) with a corresponding release of cytidine 5-monophosphate (CMP). The chain is 2-C-methyl-D-erythritol 2,4-cyclodiphosphate synthase from Clostridium acetobutylicum (strain ATCC 824 / DSM 792 / JCM 1419 / IAM 19013 / LMG 5710 / NBRC 13948 / NRRL B-527 / VKM B-1787 / 2291 / W).